The sequence spans 282 residues: Pantothenate synthetase (282 aa).

Residue 30-37 (MGALHAGH) coordinates ATP. The Proton donor role is filled by His-37. Gln-61 contacts (R)-pantoate. Residue Gln-61 participates in beta-alanine binding. 147–150 (GEKD) is an ATP binding site. Gln-153 is a (R)-pantoate binding site. Residues Val-177 and 185-188 (LSSR) each bind ATP.

It belongs to the pantothenate synthetase family. Homodimer.

The protein resides in the cytoplasm. The enzyme catalyses (R)-pantoate + beta-alanine + ATP = (R)-pantothenate + AMP + diphosphate + H(+). It functions in the pathway cofactor biosynthesis; (R)-pantothenate biosynthesis; (R)-pantothenate from (R)-pantoate and beta-alanine: step 1/1. Catalyzes the condensation of pantoate with beta-alanine in an ATP-dependent reaction via a pantoyl-adenylate intermediate. The polypeptide is Pantothenate synthetase (Phocaeicola vulgatus (strain ATCC 8482 / DSM 1447 / JCM 5826 / CCUG 4940 / NBRC 14291 / NCTC 11154) (Bacteroides vulgatus)).